Consider the following 289-residue polypeptide: Probable early E4 33 kDa protein (289 aa).

This sequence belongs to the adenoviridae E4 30 to 34 kDa protein family. In terms of assembly, interacts with E1B-55k.

It localises to the host nucleus. It is found in the host cytoplasm. Plays a major role to prevent cellular inhibition of viral genome replication by nuclear bodies. Assembles an SCF-like E3 ubiquitin ligase complex based on the cellular proteins ELOB, ELOC, CUL5 and RBX1, in cooperation with viral E1B-55K. This viral RING-type ligase ubiquitinates cellular substrates prior to proteasomal degradation: p53/TP53, LIG4, MRE11-RAD50-NBS1 (MRN) complex, ITGA3, DAXX and BLM. This chain is Probable early E4 33 kDa protein, found in Mus musculus (Mouse).